The following is a 177-amino-acid chain: UPF0200 protein STK_09500 (177 aa).

11-18 provides a ligand contact to ATP; the sequence is GMPGSGKG.

This sequence belongs to the UPF0200 family.

The sequence is that of UPF0200 protein STK_09500 from Sulfurisphaera tokodaii (strain DSM 16993 / JCM 10545 / NBRC 100140 / 7) (Sulfolobus tokodaii).